Here is a 125-residue protein sequence, read N- to C-terminus: Large ribosomal subunit protein uL22c (125 aa).

This sequence belongs to the universal ribosomal protein uL22 family. In terms of assembly, part of the 50S ribosomal subunit.

Its subcellular location is the plastid. The protein resides in the chloroplast. Its function is as follows. This protein binds specifically to 23S rRNA. The globular domain of the protein is located near the polypeptide exit tunnel on the outside of the subunit, while an extended beta-hairpin is found that lines the wall of the exit tunnel in the center of the 70S ribosome. This is Large ribosomal subunit protein uL22c (rpl22) from Nymphaea alba (White water-lily).